The chain runs to 637 residues: Chaperone protein HtpG (637 aa).

Positions 1 to 328 (MADIEELKFD…SSDLPLNISR (328 aa)) are a; substrate-binding. Residues 329 to 556 (ETLQNNRIVE…DNSMDIRMER (228 aa)) are b. The interval 488–508 (IGASDDSGDKTSEDSGESASD) is disordered. Residues 494–508 (SGDKTSEDSGESASD) show a composition bias toward basic and acidic residues. A c region spans residues 557 to 637 (FLREQKQLNY…GVLAKIFSSK (81 aa)).

It belongs to the heat shock protein 90 family. Homodimer.

The protein resides in the cytoplasm. Molecular chaperone. Has ATPase activity. The protein is Chaperone protein HtpG of Anaplasma phagocytophilum (strain HZ).